We begin with the raw amino-acid sequence, 859 residues long: Protein FAM171A1 (859 aa).

The N-terminal stretch at Met1–Gly20 is a signal peptide. Over Ala21–Thr307 the chain is Extracellular. 3 N-linked (GlcNAc...) asparagine glycosylation sites follow: Asn163, Asn194, and Asn198. A helical transmembrane segment spans residues Ile308–Leu328. The Cytoplasmic portion of the chain corresponds to Leu329–Lys859. Disordered regions lie at residues Ser397–Leu421, Thr484–Glu509, and Gln771–Lys859. The span at Phe400–Met416 shows a compositional bias: basic and acidic residues. 2 stretches are compositionally biased toward polar residues: residues Thr484–Glu497 and Ser797–Glu806. Over residues Gly838–Pro852 the composition is skewed to basic and acidic residues.

The protein belongs to the FAM171 family.

It localises to the cell membrane. Functionally, may be involved in the regulation of the cytoskeletal dynamics, plays a role in actin stress fiber formation. In Xenopus laevis (African clawed frog), this protein is Protein FAM171A1 (fam171a1).